The sequence spans 442 residues: Microfibrillar-associated protein 1 (442 aa).

Disordered regions lie at residues 1-34 (MSAP…YGEG) and 113-203 (EVVS…PRLK). 2 stretches are compositionally biased toward acidic residues: residues 134–148 (DTSE…DEEI) and 181–198 (ESEL…EDEM).

Belongs to the MFAP1 family. In terms of assembly, component of the spliceosome B complex. Interacts with PRPF38A (via N-terminal interaction domain). As to expression, widely expressed.

It is found in the nucleus. Its function is as follows. Involved in pre-mRNA splicing as a component of the spliceosome. This is Microfibrillar-associated protein 1 from Gallus gallus (Chicken).